Consider the following 520-residue polypeptide: Calcium and calcium/calmodulin-dependent serine/threonine-protein kinase (520 aa).

Residues 13-302 form the Protein kinase domain; sequence YEVVDVLGKG…ANDLLKHPWV (290 aa). ATP-binding positions include 19-27 and K44; that span reads LGKGGFSVV. Catalysis depends on D167, which acts as the Proton acceptor. The chain crosses the membrane as a helical span at residues 227–243; it reads MWSLGVILYILLSGCPP. At T267 the chain carries Phosphothreonine; by autocatalysis. A calmodulin-binding region spans residues 325–338; the sequence is ARRKLRAAAIASVL. Residues 346-368 are a coiled coil; the sequence is TKKLKNLLGSHDMKSEELENLRA. EF-hand domains lie at 361–395, 396–431, 432–467, and 474–509; these read EELE…MKMN, SLIP…LRNS, QGDD…LPED, and TEPG…DSSL. The Ca(2+) site is built by D409, N411, D413, T415, E420, D445, D447, S449, C451, E456, D487, N489, D491, and E498.

This sequence belongs to the protein kinase superfamily. CAMK Ser/Thr protein kinase family. CaMK subfamily. Autophosphorylation stimulated by calcium and inhibited by calcium/calmodulin. Occurs probably by an intermolecular mechanism.

It localises to the membrane. The enzyme catalyses L-seryl-[protein] + ATP = O-phospho-L-seryl-[protein] + ADP + H(+). It catalyses the reaction L-threonyl-[protein] + ATP = O-phospho-L-threonyl-[protein] + ADP + H(+). Its activity is regulated as follows. Activated by calcium/calmodulin binding after calcium-induced autophosphorylation. Autophosphorylation is associated with a time-dependent loss of kinase activity sensitive to reaction pH and ATP concentration. In vitro inactivation leads to the formation of network-like structures. Its function is as follows. Protein kinase that may be involved in microsporogenesis. In Lilium longiflorum (Trumpet lily), this protein is Calcium and calcium/calmodulin-dependent serine/threonine-protein kinase (CCAMK).